The following is a 255-amino-acid chain: Electron transfer flavoprotein subunit beta (255 aa).

N-acetylalanine is present on A2. Residues A9, 39 to 42 (NPFC), C66, and 123 to 134 (GKQAIDDDCNQT) each bind AMP. A recognition loop region spans residues 183 to 205 (ADLRLNEPRYATLPNIMKAKKKK). K200 is modified (N6,N6,N6-trimethyllysine; by ETFBKMT; alternate). Residue K200 is modified to N6-acetyllysine; alternate. K200 is modified (N6-methyllysine; alternate). An N6,N6,N6-trimethyllysine; by ETFBKMT modification is found at K203. K210 is subject to N6-acetyllysine; alternate. K210 carries the N6-succinyllysine; alternate modification. 2 positions are modified to phosphoserine: S223 and S226. K238 is subject to N6-acetyllysine. K248 bears the N6-acetyllysine; alternate mark. Residue K248 is modified to N6-succinyllysine; alternate.

The protein belongs to the ETF beta-subunit/FixA family. Heterodimer composed of ETFA and ETFB. Identified in a complex that contains ETFA, ETFB and ETFRF1. Interacts with ACADM. Methylated. Trimethylation at Lys-200 and Lys-203 may negatively regulate the activity in electron transfer from acyl-CoA dehydrogenases.

It localises to the mitochondrion matrix. Functionally, heterodimeric electron transfer flavoprotein that accepts electrons from several mitochondrial dehydrogenases, including acyl-CoA dehydrogenases, glutaryl-CoA and sarcosine dehydrogenase. It transfers the electrons to the main mitochondrial respiratory chain via ETF-ubiquinone oxidoreductase. Required for normal mitochondrial fatty acid oxidation and normal amino acid metabolism. ETFB binds an AMP molecule that probably has a purely structural role. In Bos taurus (Bovine), this protein is Electron transfer flavoprotein subunit beta.